Reading from the N-terminus, the 371-residue chain is Aromatic peroxygenase (371 aa).

Residues 1–18 (MKYFPLFPTLVFAARVVA) form the signal peptide. Residues 19 to 43 (FPAYASLAGLSQQELDAIIPTLEAR) constitute a propeptide that is removed on maturation. An N-linked (GlcNAc...) asparagine glycan is attached at N54. C79 serves as a coordination point for heme. N184, N204, N225, and N329 each carry an N-linked (GlcNAc...) asparagine glycan. A disulfide bridge connects residues C321 and C362.

It belongs to the chloroperoxidase family. Requires heme b as cofactor. Post-translationally, N-glycosylated.

The enzyme catalyses RH + H2O2 = ROH + H2O.. Its function is as follows. Aromatic peroxidase that oxidizes aryl alcohols into the corresponding aldehydes and then into the corresponding benzoic acids. Oxidizes toluene and naphthalene. Catalyzes the regioselective peroxide-dependent hydroxylation of propranolol and diclofenac to 5-hydroxypropranolol and 4'-hydroxydiclofenac. Catalyzes the regioselective peroxide-dependent hydroxylation of naphthalene to 1-naphthol or 2-naphthol via a naphthalene 1,2-oxide intermediate. Catalyzes the regioselective peroxide-dependent oxidation of pyridine to pyridine N-oxide. Halogenates monochlorodimedone and phenol. Oxidizes the sulfur-containing heterocycle dibenzothiophene to yield ring-hydroxylation products and to a lesser extent sulfoxidation products. In Cyclocybe aegerita (Black poplar mushroom), this protein is Aromatic peroxygenase.